The chain runs to 452 residues: MNHLVLGYVGLVIGVIVTKKSMVWRVGQVGSVLLMLPATVLVNMNMTISNVSYMMTSDFVSLGLTVLSIWLLPLMLLASQQHMVSESLIYQRVFVGCQVFLTGALVLAFMASDLLLFYIAFESTLLPTLMLITRWGAQKERYQAGTYFMFFTLVGSLPLLICLIGQYQMVGSLALDLSYEGVFQLSYLVNFWWVGCILAFLVKLPLYGVHLWLPKAHVEAPIAGSMVLAGVLLKLGGYGMMRVSLMWGATAMLSSEVFLALALWGIVVMGGICLRQTDLKSLIAYSSVGHMALVVGGVLTGVAWGYNGAMVLMIAHGLVSSCLFCLANLWYERSSTRNLSGSRGLIMIFPLISSGWFLMSLMNMALPPAINLFGELVAMVALYNWSPYSIVYMSLGAVLTAAYSLYLFGMSQWGNTMKNYKNLYTITSREYLLTTLHLVPAIYLIFYLGLMF.

A run of 14 helical transmembrane segments spans residues 4–24 (LVLG…SMVW), 29–49 (VGSV…MTIS), 59–79 (FVSL…LLAS), 88–110 (LIYQ…LAFM), 114–136 (LLLF…TRWG), 144–164 (AGTY…ICLI), 182–202 (VFQL…AFLV), 221–241 (PIAG…YGMM), 252–272 (MLSS…MGGI), 282–304 (LIAY…GVAW), 309–331 (AMVL…NLWY), 345–365 (LIMI…MNMA), 390–410 (IVYM…LFGM), and 432–452 (LLTT…GLMF).

It belongs to the complex I subunit 4 family.

It is found in the mitochondrion membrane. The catalysed reaction is a ubiquinone + NADH + 5 H(+)(in) = a ubiquinol + NAD(+) + 4 H(+)(out). Functionally, core subunit of the mitochondrial membrane respiratory chain NADH dehydrogenase (Complex I) that is believed to belong to the minimal assembly required for catalysis. Complex I functions in the transfer of electrons from NADH to the respiratory chain. The immediate electron acceptor for the enzyme is believed to be ubiquinone. The polypeptide is NADH-ubiquinone oxidoreductase chain 4 (ND4) (Branchiostoma floridae (Florida lancelet)).